A 404-amino-acid polypeptide reads, in one-letter code: Cysteine desulfurase IscS (404 aa).

Pyridoxal 5'-phosphate contacts are provided by residues 75–76 (AT), N155, Q183, and 203–205 (SAH). At K206 the chain carries N6-(pyridoxal phosphate)lysine. T243 provides a ligand contact to pyridoxal 5'-phosphate. Catalysis depends on C328, which acts as the Cysteine persulfide intermediate. C328 lines the [2Fe-2S] cluster pocket.

The protein belongs to the class-V pyridoxal-phosphate-dependent aminotransferase family. NifS/IscS subfamily. In terms of assembly, homodimer. Forms a heterotetramer with IscU, interacts with other sulfur acceptors. The cofactor is pyridoxal 5'-phosphate.

The protein localises to the cytoplasm. It carries out the reaction (sulfur carrier)-H + L-cysteine = (sulfur carrier)-SH + L-alanine. It participates in cofactor biosynthesis; iron-sulfur cluster biosynthesis. Master enzyme that delivers sulfur to a number of partners involved in Fe-S cluster assembly, tRNA modification or cofactor biosynthesis. Catalyzes the removal of elemental sulfur atoms from cysteine to produce alanine. Functions as a sulfur delivery protein for Fe-S cluster synthesis onto IscU, an Fe-S scaffold assembly protein, as well as other S acceptor proteins. This chain is Cysteine desulfurase IscS, found in Shewanella loihica (strain ATCC BAA-1088 / PV-4).